The chain runs to 152 residues: Deoxyuridine 5'-triphosphate nucleotidohydrolase (152 aa).

Substrate-binding positions include 72-74, N85, 89-91, and K99; these read RSG and TID.

It belongs to the dUTPase family. Requires Mg(2+) as cofactor.

The enzyme catalyses dUTP + H2O = dUMP + diphosphate + H(+). The protein operates within pyrimidine metabolism; dUMP biosynthesis; dUMP from dCTP (dUTP route): step 2/2. Its function is as follows. This enzyme is involved in nucleotide metabolism: it produces dUMP, the immediate precursor of thymidine nucleotides and it decreases the intracellular concentration of dUTP so that uracil cannot be incorporated into DNA. This Bradyrhizobium diazoefficiens (strain JCM 10833 / BCRC 13528 / IAM 13628 / NBRC 14792 / USDA 110) protein is Deoxyuridine 5'-triphosphate nucleotidohydrolase.